We begin with the raw amino-acid sequence, 58 residues long: UPF0339 protein Msl4696 (58 aa).

Belongs to the UPF0339 family.

The sequence is that of UPF0339 protein Msl4696 from Mesorhizobium japonicum (strain LMG 29417 / CECT 9101 / MAFF 303099) (Mesorhizobium loti (strain MAFF 303099)).